We begin with the raw amino-acid sequence, 248 residues long: Tetraspanin-18 (248 aa).

Over Met1–Met13 the chain is Cytoplasmic. Residues Phe14–Val34 form a helical membrane-spanning segment. The Extracellular portion of the chain corresponds to Met35–Pro49. Residues Leu50–Phe70 traverse the membrane as a helical segment. The Cytoplasmic segment spans residues Leu71–Leu83. The helical transmembrane segment at Leu84–Leu104 threads the bilayer. Topologically, residues Ala105 to Gly223 are extracellular. N-linked (GlcNAc...) asparagine glycans are attached at residues Asn111 and Asn129. The chain crosses the membrane as a helical span at residues Ala224–Phe244. At Arg245 to Gln248 the chain is on the cytoplasmic side.

It belongs to the tetraspanin (TM4SF) family. As to quaternary structure, interacts with ORAI1; this interaction regulates ORAI1 exit from the endoplasmic (ER), and/or Golgi, and trafficking to the cell surface. Highly expressed in primary endothelial cells. Expressed in the embryo heart. Weakly expressed the embryo skeletal muscle.

It localises to the membrane. In terms of biological role, plays a role in the cell surface localization of ORAI1 and may participate in the regulation of Ca(2+) signaling and the VWF release in response to inflammatory stimuli. The protein is Tetraspanin-18 of Homo sapiens (Human).